The following is a 1135-amino-acid chain: LRR receptor-like serine/threonine-protein kinase RGI2 (1135 aa).

Residues 1 to 35 form the signal peptide; it reads MSLQMPIPRKKALTVSHFSITLSLFLAFFISSTSA. Residues 36 to 723 are Extracellular-facing; sequence STNEVSALIS…QRGVHSHRLR (688 aa). Residues cysteine 69 and cysteine 76 are joined by a disulfide bond. N-linked (GlcNAc...) asparagine glycans are attached at residues asparagine 101 and asparagine 117. LRR repeat units lie at residues 105–129, 130–153, 154–177, and 179–203; these read FTSLQKLVISNTNLTGAISSEIGDC, SELIVIDLSSNSLVGEIPSSLGKL, KNLQELCLNSNGLTGKIPPELGDC, and SLKNLEIFDNYLSENLPLELGKIST. Short sequence motifs (small peptide recognition) lie at residues 186-187, 208-211, 231-236, and tyrosine 259; these read FD, RAGG, and VLGLAA. LRR repeat units follow at residues 226–250, 251–274, 276–298, 299–323, 325–345, 346–370, 372–395, 397–418, 419–442, 444–466, 467–490, 491–514, 516–538, 539–562, 564–586, 587–610, 612–634, 635–658, and 659–683; these read CRNLKVLGLAATKISGSLPVSLGQL, SKLQSLSVYSTMLSGEIPKELGNC, ELINLFLYDNDLSGTLPKELGKL, QNLEKMLLWQNNLHGPIPEEIGFMK, LNAIDLSMNYFSGTIPKSFGN, LSNLQELMLSSNNITGSIPSILSNC, KLVQFQIDANQISGLIPPEIGLLK, LNIFLGWQNKLEGNIPDELAGC, QNLQALDLSQNYLTGSLPAGLFQL, NLTKLLLISNAISGVIPLEIGNC, TSLVRLRLVNNRITGEIPKGIGFL, QNLSFLDLSENNLSGPVPLEISNC, QLQMLNLSNNTLQGYLPLSLSSL, TKLQVLDVSSNDLTGKIPDSLGHL, SLNRLILSKNSFNGEIPSSLGHC, TNLQLLDLSSNNISGTIPEELFDI, DLDIALNLSWNSLDGFIPERISA, LNRLSVLDISHNMLSGDLSALSGL, and ENLVSLNISHNRFSGYLPDSKVFRQ. Asparagine 273 is a glycosylation site (N-linked (GlcNAc...) asparagine). A Small peptide recognition motif is present at residues 281-283; sequence FLY. A Small peptide recognition motif is present at residues 329–332; the sequence is DLSM. N-linked (GlcNAc...) asparagine glycosylation occurs at asparagine 345. The Small peptide recognition signature appears at 351-353; it reads ELM. Residues asparagine 358 and asparagine 369 are each glycosylated (N-linked (GlcNAc...) asparagine). Short sequence motifs (small peptide recognition) lie at residues 399-403 and 425-428; these read IFLGW and DLSQ. A glycan (N-linked (GlcNAc...) asparagine) is linked at asparagine 444. Residues 447-451 carry the Small peptide recognition motif; sequence KLLLI. N-linked (GlcNAc...) asparagine glycosylation is present at asparagine 465. The Small peptide recognition motif lies at 471–473; the sequence is RLR. Residues asparagine 492, asparagine 502, asparagine 521, and asparagine 524 are each glycosylated (N-linked (GlcNAc...) asparagine). Asparagine 598 and asparagine 618 each carry an N-linked (GlcNAc...) asparagine glycan. 2 N-linked (GlcNAc...) asparagine glycosylation sites follow: asparagine 665 and asparagine 707. Residues 724–744 form a helical membrane-spanning segment; it reads IAIGLLISVTAVLAVLGVLAV. At 745-1135 the chain is on the cytoplasmic side; sequence IRAKQMIRDD…ATSNVRPNLK (391 aa). Threonine 777 carries the post-translational modification Phosphothreonine. The 282-residue stretch at 785–1066 folds into the Protein kinase domain; sequence LVEGNVIGKG…KDVAAMLSEI (282 aa). ATP is bound by residues 791–799 and lysine 813; that span reads IGKGCSGIV. 2 positions are modified to phosphotyrosine: tyrosine 868 and tyrosine 907. Aspartate 920 functions as the Proton acceptor in the catalytic mechanism. Tyrosine 963 and tyrosine 970 each carry phosphotyrosine. The disordered stretch occupies residues 1077-1135; the sequence is DGCSGSCNNGRERGKDDSTSSVMQQTAKYLRSSSTSFSASSLLYSSSSSATSNVRPNLK. A compositionally biased stretch (low complexity) spans 1108-1128; sequence SSSTSFSASSLLYSSSSSATS.

The protein belongs to the protein kinase superfamily. Ser/Thr protein kinase family. Binds to RGF peptides such as RGF1, GLV5/CLEL1/RGF2, GLV7/CLEL3/RGF3, GLV3/RGF4, GLV10/CLEL7/RGF5 and RGF10/CLELN; these interactions trigger the formation of heterodimers with SERK1. Interacts with UBP13. Phosphorylated and ubiquitinated upon interaction with RGF1, thus leading to activation a subsequent degradation. Stabilized by UBP12 and UBP13-mediated deubiquitination. In terms of processing, autophosphorylated. In terms of tissue distribution, specific to root meristems, especially in lateral root meristems (LRM).

Its subcellular location is the membrane. It carries out the reaction L-seryl-[protein] + ATP = O-phospho-L-seryl-[protein] + ADP + H(+). The catalysed reaction is L-threonyl-[protein] + ATP = O-phospho-L-threonyl-[protein] + ADP + H(+). Together with RGI1, RGI3, RGI4 and RGI5, acts as a receptor of RGF peptides (e.g. RGF1, GLV5/CLEL1/RGF2, GLV7/CLEL3/RGF3, GLV3/RGF4, GLV10/CLEL7/RGF5 and RGF10/CLELN), peptide hormones which maintain the postembryonic root stem cell niche by regulating the expression levels and patterns of the transcription factor PLETHORA (PLT, e.g. PLT1 and PLT2). Links RGF peptides signal with their downstream components. This Arabidopsis thaliana (Mouse-ear cress) protein is LRR receptor-like serine/threonine-protein kinase RGI2.